Reading from the N-terminus, the 1431-residue chain is Caskin-1 (1431 aa).

6 ANK repeats span residues Asp-48–Ile-77, Lys-81–Val-110, Glu-114–Met-143, Ser-147–Leu-176, Asn-188–Arg-217, and Lys-220–Val-249. Position 253 is a phosphotyrosine (Tyr-253). Residues Ser-281 to Lys-347 enclose the SH3 domain. The tract at residues Arg-348–Pro-372 is disordered. At Ser-358 the chain carries Phosphoserine. The CASK-binding stretch occupies residues Ile-375 to Ser-471. Residue Arg-398 is modified to Omega-N-methylarginine. Residues Ser-420–Gly-430 are compositionally biased toward polar residues. The segment at Ser-420–Ser-471 is disordered. Phosphoserine occurs at positions 423 and 432. SAM domains are found at residues Lys-476–Pro-539 and His-545–Leu-609. Residues Ser-637 and Ser-650 each carry the phosphoserine modification. Positions Leu-669–Ala-679 are enriched in low complexity. Disordered regions lie at residues Leu-669–Ala-1000 and Gly-1016–Arg-1041. The span at Arg-692 to Glu-712 shows a compositional bias: polar residues. Phosphoserine occurs at positions 723 and 728. Phosphothreonine is present on Thr-741. Ser-791 is modified (phosphoserine). Over residues Pro-848–Ala-860 the composition is skewed to pro residues. Phosphoserine occurs at positions 891, 893, and 989. Positions Gly-1028–Pro-1037 are enriched in pro residues. Phosphothreonine is present on Thr-1067. At Ser-1069 the chain carries Phosphoserine. Disordered regions lie at residues Val-1072 to Leu-1372 and Lys-1389 to Ser-1410. Over residues Asp-1148–Asp-1160 the composition is skewed to basic and acidic residues. The segment covering Pro-1191–Leu-1215 has biased composition (pro residues). The segment covering Gln-1236–Pro-1247 has biased composition (polar residues). Ser-1259 carries the phosphoserine modification. A Phosphothreonine modification is found at Thr-1268. The span at Thr-1268 to Pro-1283 shows a compositional bias: pro residues. Low complexity-rich tracts occupy residues Lys-1284–Pro-1299, Pro-1309–Pro-1327, and Pro-1345–Ser-1359. Position 1363 is a phosphoserine (Ser-1363). A compositionally biased stretch (basic and acidic residues) spans Lys-1389–Ser-1407.

As to quaternary structure, binds the CaM kinase domain of CASK. Forms a ternary complex with CASK and LIN7A, LIN7B or LIN7C. Competes with APBA1 that forms a similar complex with CASK and LIN7 proteins. The tripartite complex CASKIN1/CASK/LIN7(A/B/C) binds the cytoplasmic tail of NRXN1. Polymerizes, via the tandem SAM domains, to form long, 8 nM wide fibers, upon which other proteins can assemble.

It is found in the cytoplasm. Functionally, may link the scaffolding protein CASK to downstream intracellular effectors. This Mus musculus (Mouse) protein is Caskin-1 (Caskin1).